Consider the following 217-residue polypeptide: Probable GTP-binding protein EngB (217 aa).

The 185-residue stretch at 33–217 folds into the EngB-type G domain; sequence GPTEIAFAGR…RAAIELAVAR (185 aa). Residues 41 to 48, 68 to 72, 95 to 98, 162 to 165, and 196 to 198 each bind GTP; these read GRSNVGKS, GRTQE, DMPG, TKTD, and TSS. The Mg(2+) site is built by Ser48 and Thr70.

Belongs to the TRAFAC class TrmE-Era-EngA-EngB-Septin-like GTPase superfamily. EngB GTPase family. Mg(2+) is required as a cofactor.

Functionally, necessary for normal cell division and for the maintenance of normal septation. The sequence is that of Probable GTP-binding protein EngB from Sinorhizobium medicae (strain WSM419) (Ensifer medicae).